Here is a 411-residue protein sequence, read N- to C-terminus: Peptidase T (411 aa).

Histidine 79 is a binding site for Zn(2+). The active site involves aspartate 81. Aspartate 142 serves as a coordination point for Zn(2+). Glutamate 176 (proton acceptor) is an active-site residue. Positions 177, 199, and 381 each coordinate Zn(2+).

The protein belongs to the peptidase M20B family. Zn(2+) is required as a cofactor.

The protein resides in the cytoplasm. The enzyme catalyses Release of the N-terminal residue from a tripeptide.. Cleaves the N-terminal amino acid of tripeptides. In Geobacillus thermodenitrificans (strain NG80-2), this protein is Peptidase T.